A 287-amino-acid polypeptide reads, in one-letter code: Nucleotide-binding protein MXAN_6564 (287 aa).

ATP is bound at residue 13–20 (GMSGSGKS). 62-65 (DVRE) lines the GTP pocket.

The protein belongs to the RapZ-like family.

Its function is as follows. Displays ATPase and GTPase activities. This is Nucleotide-binding protein MXAN_6564 from Myxococcus xanthus (strain DK1622).